The primary structure comprises 255 residues: MFVNLNKSLIAQRFAKARQSYVENAIAQKKISHHLCHLMQAYCPLHLSRIFEIGCGSGNLTQELFVSFQIQRAYLNDLYDEVKQHFLDEQPIEWCIGDIESLSLPEHLNAIVSSSAIQWVQNLPQLLGRCHHALNDQGWLCLSTFGSDNFKEIKQLTGQGLSYWSVQDWQVHLQASGFELMKIEQQQLKMQFDSPRAILKHLKATGVTGTVATTQPHWNKQSLAQFYHDYCQFQTDDGHYELTYHPIYIIARRTS.

The protein belongs to the methyltransferase superfamily.

It catalyses the reaction malonyl-[ACP] + S-adenosyl-L-methionine = malonyl-[ACP] methyl ester + S-adenosyl-L-homocysteine. It functions in the pathway cofactor biosynthesis; biotin biosynthesis. In terms of biological role, converts the free carboxyl group of a malonyl-thioester to its methyl ester by transfer of a methyl group from S-adenosyl-L-methionine (SAM). It allows to synthesize pimeloyl-ACP via the fatty acid synthetic pathway. This chain is Malonyl-[acyl-carrier protein] O-methyltransferase, found in Acinetobacter baylyi (strain ATCC 33305 / BD413 / ADP1).